The following is a 269-amino-acid chain: Flagellar brake protein YcgR (269 aa).

The region spanning 134–254 (QRRNFYRVTT…SRLLIQRYIT (121 aa)) is the PilZ domain.

The protein belongs to the YcgR family. As to quaternary structure, monomer. Interacts with the flagellar basal bodies.

It localises to the bacterial flagellum basal body. Functionally, acts as a flagellar brake, regulating swimming and swarming in a bis-(3'-5') cyclic diguanylic acid (c-di-GMP)-dependent manner. Binds 1 c-di-GMP dimer per subunit. Increasing levels of c-di-GMP lead to decreased motility. In Nitrosomonas eutropha (strain DSM 101675 / C91 / Nm57), this protein is Flagellar brake protein YcgR.